The primary structure comprises 503 residues: Aminoaldehyde dehydrogenase 1, peroxisomal (503 aa).

Na(+) contacts are provided by Ile28, Asp99, and Leu189. 238 to 245 (GSTMTGSK) provides a ligand contact to NAD(+). The Proton acceptor role is filled by Glu260. NAD(+)-binding residues include Cys294 and Glu393. Catalysis depends on Cys294, which acts as the Nucleophile.

The protein belongs to the aldehyde dehydrogenase family. As to expression, expressed in leaves, flowers and fruits.

It localises to the cytoplasm. It is found in the cytosol. It carries out the reaction 4-aminobutanal + NAD(+) + H2O = 4-aminobutanoate + NADH + 2 H(+). The catalysed reaction is 3-aminopropanal + NAD(+) + H2O = beta-alanine + NADH + 2 H(+). Its pathway is amine and polyamine biosynthesis; betaine biosynthesis via choline pathway; betaine from betaine aldehyde: step 1/1. Its function is as follows. Dehydrogenase that catalyzes the oxidation of several aminoaldehydes. Metabolizes and detoxifies aldehyde products of polyamine degradation to non-toxic amino acids. Catalyzes the oxidation of 4-aminobutanal and 3-aminopropanal to 4-aminobutanoate and beta-alanine, respectively. This Malus domestica (Apple) protein is Aminoaldehyde dehydrogenase 1, peroxisomal.